A 1133-amino-acid chain; its full sequence is Tudor domain-containing protein 1 (1133 aa).

The disordered stretch occupies residues 1 to 55 (MNELRMPNLVRPNRPLREPASRPLTPSRFPVPSQPDAAYTGSAAGSTGLGSPGPA). Residues 37-46 (AAYTGSAAGS) show a composition bias toward low complexity. The Zn(2+) site is built by Cys-75, Cys-78, Cys-86, Cys-89, Cys-95, Cys-99, His-107, and Cys-111. The MYND-type zinc finger occupies 75–111 (CHYCGQQGIFRCKGCKKTPYCSVDCQREDWKAHRHMC). Tudor domains follow at residues 204–264 (VPCV…TKPY), 435–494 (RPAP…LLAL), and 656–714 (VPKV…LLKL). Residues 786–836 (SGNLSKDPVRSPTTKQEDLRGGDQSQALTPASNDTQAVCEDGKSEEEPSEV) form a disordered region. Polar residues predominate over residues 808 to 821 (DQSQALTPASNDTQ). Positions 904–962 (RPVPGAACCAQFSVDKIWYRAIILEVGEAEMSVVYADYGNSEKVPVSQILPIPTRLLQL) constitute a Tudor 4 domain. Residues 1036 to 1104 (KGSPLPDASQ…QATSVHDLQG (69 aa)) are disordered. Polar residues predominate over residues 1079-1088 (VTNTQESTPQ).

The protein belongs to the TDRD1 family. As to quaternary structure, interacts with MAEL. Interacts with PIWIL1, PIWIL2 and PIWIL4 (when methylated on arginine residues). Expressed in both the ovary and testis in the adult. Present in migrating primordial germ cells (PGCs) and also in the germ cells in both the gonadal primordia (stage 33), and in the developing ovary and testis.

It is found in the cytoplasm. Plays a central role during spermatogenesis by participating in the repression transposable elements and preventing their mobilization, which is essential for the germline integrity. Acts via the piRNA metabolic process, which mediates the repression of transposable elements during meiosis by forming complexes composed of piRNAs and Piwi proteins and governs the methylation and subsequent repression of transposons. Required for the localization of Piwi proteins to the meiotic nuage. Involved in the piRNA metabolic process by ensuring the entry of correct transcripts into the normal piRNA pool and limiting the entry of cellular transcripts into the piRNA pathway. May act by allowing the recruitment of piRNA biogenesis or loading factors that ensure the correct entry of transcripts and piRNAs into Piwi proteins. This chain is Tudor domain-containing protein 1 (tdrd1), found in Oryzias latipes (Japanese rice fish).